Here is a 252-residue protein sequence, read N- to C-terminus: Adenosylcobinamide-GDP ribazoletransferase (252 aa).

The next 7 membrane-spanning stretches (helical) occupy residues 4–24 (LLLL…LPYI), 35–55 (LVPM…GGMN), 65–85 (SALV…DGAM), 102–122 (VMAD…ILLL), 178–198 (LLPG…VNNH), 201–221 (LITV…AAWF), and 232–252 (TYGA…TILT).

This sequence belongs to the CobS family. The cofactor is Mg(2+).

It localises to the cell inner membrane. It catalyses the reaction alpha-ribazole + adenosylcob(III)inamide-GDP = adenosylcob(III)alamin + GMP + H(+). It carries out the reaction alpha-ribazole 5'-phosphate + adenosylcob(III)inamide-GDP = adenosylcob(III)alamin 5'-phosphate + GMP + H(+). Its pathway is cofactor biosynthesis; adenosylcobalamin biosynthesis; adenosylcobalamin from cob(II)yrinate a,c-diamide: step 7/7. Joins adenosylcobinamide-GDP and alpha-ribazole to generate adenosylcobalamin (Ado-cobalamin). Also synthesizes adenosylcobalamin 5'-phosphate from adenosylcobinamide-GDP and alpha-ribazole 5'-phosphate. The polypeptide is Adenosylcobinamide-GDP ribazoletransferase (Trichormus variabilis (strain ATCC 29413 / PCC 7937) (Anabaena variabilis)).